Here is a 1845-residue protein sequence, read N- to C-terminus: Histone-lysine N-methyltransferase, H3 lysine-79 specific (1845 aa).

Polar residues predominate over residues 1-44 (MSTNSTPRKQKLSNSKSLQNSPISPTVKKTNSFPLGNNIPTNIN). Disordered stretches follow at residues 1–67 (MSTN…NGIG), 83–306 (PPLP…NKWT), 450–470 (SHDI…NKNK), 486–571 (QKLK…TERK), 585–681 (RKER…NDSY), 741–767 (GETF…KKIE), 862–881 (QTTK…AETE), and 963–1102 (KDNP…SNSL). Composition is skewed to low complexity over residues 52-67 (NNSN…NGIG), 90-162 (SSSS…QQEP), 191-226 (PSTP…SNNS), and 239-263 (NNNN…NNNN). The segment covering 268–280 (VIDDDDDDDDDEG) has biased composition (acidic residues). A compositionally biased stretch (polar residues) spans 282 to 294 (SIKSTHTSTQSTP). Over residues 295-304 (IRDRRQRDNK) the composition is skewed to basic and acidic residues. Low complexity predominate over residues 453–464 (INNNNNNNNNNK). Positions 585-679 (RKERERKERK…IEKERREKND (95 aa)) are enriched in basic and acidic residues. Positions 625–639 (KKKEKEKEKEKEKEK) are required for interaction with nucleosomes and DNA. Composition is skewed to low complexity over residues 750–763 (NNNN…NNNN), 862–877 (QTTK…TTTT), 972–1011 (NNNR…RNNN), and 1020–1067 (NNNN…NNTI). Residues 1069 to 1080 (KKIETIKKDINK) are compositionally biased toward basic and acidic residues. Residues 1084–1102 (KTTTTTSSSSSSTSSSNSL) are compositionally biased toward low complexity. Residues 1125–1446 (FDVGIGVPVT…KDSDIVTDQT (322 aa)) form the DOT1 domain. S-adenosyl-L-methionine contacts are provided by residues 1251-1254 (YGEA), 1274-1283 (FCDIGCGIGN), and Glu1300. 5 disordered regions span residues 1463 to 1559 (LQLF…NKPI), 1610 to 1661 (RISP…SSND), 1735 to 1762 (HQKS…KKEQ), 1772 to 1791 (NYNN…NHNN), and 1799 to 1845 (TDLI…DNNK). 3 stretches are compositionally biased toward low complexity: residues 1467-1522 (SSSS…TPNS), 1541-1556 (NNNN…NSNN), and 1610-1642 (RISP…SSSD). The span at 1643 to 1656 (NENDDDNGDDEDDS) shows a compositional bias: acidic residues. Positions 1745–1759 (RLSRKQKKLAKKNKK) are enriched in basic residues. Low complexity-rich tracts occupy residues 1799–1817 (TDLI…INND) and 1835–1845 (KDYNNINDNNK).

The protein belongs to the class I-like SAM-binding methyltransferase superfamily. DOT1 family.

Its subcellular location is the nucleus. It catalyses the reaction L-lysyl(79)-[histone H3] + 3 S-adenosyl-L-methionine = N(6),N(6),N(6)-trimethyl-L-lysyl(79)-[histone H3] + 3 S-adenosyl-L-homocysteine + 3 H(+). Its function is as follows. Histone methyltransferase that specifically methylates histone H3 to form H3K79me. This methylation is required for telomere silencing, correct growth and development, and for resistance to DNA damage induced by UV LIGHT. This chain is Histone-lysine N-methyltransferase, H3 lysine-79 specific, found in Dictyostelium discoideum (Social amoeba).